The primary structure comprises 161 residues: UPF0178 protein BruAb1_1955 (161 aa).

Belongs to the UPF0178 family.

This chain is UPF0178 protein BruAb1_1955, found in Brucella abortus biovar 1 (strain 9-941).